The chain runs to 662 residues: Transketolase (662 aa).

His28 contributes to the substrate binding site. Residues His68 and 115–117 (GPL) contribute to the thiamine diphosphate site. Asp156 contacts Mg(2+). Thiamine diphosphate is bound by residues Gly157 and Asn186. The Mg(2+) site is built by Asn186 and Ile188. The substrate site is built by His261, Arg356, and Ser383. Residue His261 participates in thiamine diphosphate binding. The active-site Proton donor is the Glu410. A thiamine diphosphate-binding site is contributed by Phe436. Residues His460, Asp468, and Arg519 each contribute to the substrate site.

Belongs to the transketolase family. Homodimer. The cofactor is Mg(2+). Ca(2+) is required as a cofactor. Requires Mn(2+) as cofactor. Co(2+) serves as cofactor. It depends on thiamine diphosphate as a cofactor.

It carries out the reaction D-sedoheptulose 7-phosphate + D-glyceraldehyde 3-phosphate = aldehydo-D-ribose 5-phosphate + D-xylulose 5-phosphate. It participates in carbohydrate biosynthesis; Calvin cycle. The protein operates within carbohydrate degradation; pentose phosphate pathway. Catalyzes the transfer of a two-carbon ketol group from a ketose donor to an aldose acceptor, via a covalent intermediate with the cofactor thiamine pyrophosphate. The polypeptide is Transketolase (tkt) (Staphylococcus epidermidis (strain ATCC 12228 / FDA PCI 1200)).